A 224-amino-acid polypeptide reads, in one-letter code: ATP-dependent dethiobiotin synthetase BioD (224 aa).

Thr18 is a Mg(2+) binding site. Lys39 is a catalytic residue. Residue Ser43 coordinates substrate. Mg(2+)-binding residues include Asp56 and Glu117. Residues Asp56, 117 to 120 (EGVG), and 177 to 178 (NE) contribute to the ATP site.

It belongs to the dethiobiotin synthetase family. As to quaternary structure, homodimer. Mg(2+) serves as cofactor.

The protein localises to the cytoplasm. It carries out the reaction (7R,8S)-7,8-diammoniononanoate + CO2 + ATP = (4R,5S)-dethiobiotin + ADP + phosphate + 3 H(+). It participates in cofactor biosynthesis; biotin biosynthesis; biotin from 7,8-diaminononanoate: step 1/2. Catalyzes a mechanistically unusual reaction, the ATP-dependent insertion of CO2 between the N7 and N8 nitrogen atoms of 7,8-diaminopelargonic acid (DAPA, also called 7,8-diammoniononanoate) to form a ureido ring. The polypeptide is ATP-dependent dethiobiotin synthetase BioD (Xanthomonas euvesicatoria pv. vesicatoria (strain 85-10) (Xanthomonas campestris pv. vesicatoria)).